The sequence spans 415 residues: Gamma-glutamyl phosphate reductase (415 aa).

Belongs to the gamma-glutamyl phosphate reductase family.

Its subcellular location is the cytoplasm. The catalysed reaction is L-glutamate 5-semialdehyde + phosphate + NADP(+) = L-glutamyl 5-phosphate + NADPH + H(+). It functions in the pathway amino-acid biosynthesis; L-proline biosynthesis; L-glutamate 5-semialdehyde from L-glutamate: step 2/2. In terms of biological role, catalyzes the NADPH-dependent reduction of L-glutamate 5-phosphate into L-glutamate 5-semialdehyde and phosphate. The product spontaneously undergoes cyclization to form 1-pyrroline-5-carboxylate. The sequence is that of Gamma-glutamyl phosphate reductase from Desulforamulus reducens (strain ATCC BAA-1160 / DSM 100696 / MI-1) (Desulfotomaculum reducens).